The sequence spans 382 residues: FK506-binding protein 4 (382 aa).

Positions 139–274 are disordered; it reads GLEVDEEIES…KEEPKKKITK (136 aa). The span at 141–173 shows a compositional bias: acidic residues; that stretch reads EVDEEIESDEEVESDEEIESDEEIESEEEEEEP. Basic and acidic residues-rich tracts occupy residues 180 to 190 and 196 to 270; these read RPAEEVKEIAS and EKKE…EPKK. Residues 295–382 enclose the PPIase FKBP-type domain; sequence GQRVGMRYIG…VFDVKLLSMK (88 aa).

The protein belongs to the FKBP-type PPIase family. FKBP3/4 subfamily. In terms of assembly, binds to histones H3 and H4.

The protein localises to the nucleus. The catalysed reaction is [protein]-peptidylproline (omega=180) = [protein]-peptidylproline (omega=0). Inhibited by both FK506 and rapamycin. Its function is as follows. PPIase that acts as a histone chaperone. Histone proline isomerase that increases the rate of cis-trans isomerization at prolines on the histone H3 N-terminal tail. Proline isomerization influences H3 methylation thereby regulating gene expression. In Rhizopus delemar (strain RA 99-880 / ATCC MYA-4621 / FGSC 9543 / NRRL 43880) (Mucormycosis agent), this protein is FK506-binding protein 4 (FKBP4).